A 509-amino-acid chain; its full sequence is Cytochrome P450 monooxygenase hepC (509 aa).

A helical membrane pass occupies residues 5–25 (MIIPSFWTGTAIIGLVACAYV). Residue Cys-454 participates in heme binding. An N-linked (GlcNAc...) asparagine glycan is attached at Asn-491.

Belongs to the cytochrome P450 family. The cofactor is heme.

It localises to the membrane. The protein operates within secondary metabolite biosynthesis. Functionally, cytochrome P450 monooxygenase; part of the gene cluster that mediates the biosynthesis of heptelidic acid (HA), a sesquiterpene lactone that acts as an inhibitor of glyceraldehyde-3-phosphatedehydrogenase (GAPDH) and a growth inhibitor of the salt-tolerant lactic acid bacteria in soy sauce brewing. This chain is Cytochrome P450 monooxygenase hepC, found in Aspergillus oryzae (strain ATCC 42149 / RIB 40) (Yellow koji mold).